The primary structure comprises 571 residues: E3 ubiquitin-protein ligase RNF168 (571 aa).

The RING-type zinc finger occupies 16 to 55 (CGICMEILVEPVTLPCNHTLCKPCFQSTVEKASLCCPFCR). The residue at position 70 (Ser70) is a Phosphoserine. The short motif at 110–128 (LSKPGELRREYEEEISKVA) is the LR motif 1 element. The residue at position 134 (Ser134) is a Phosphoserine. A UMI motif motif is present at residues 143-151 (EEYIQRLLA). 2 disordered regions span residues 151-174 (AEEE…QLKS) and 191-292 (EGSI…GADS). An MIU motif 1 motif is present at residues 168 to 191 (MEEQLKSDEELARKLSIDINNFCE). Position 197 is a phosphoserine (Ser197). Residues 202-214 (RKSDPVTPKSEKK) show a composition bias toward basic and acidic residues. Lys210 participates in a covalent cross-link: Glycyl lysine isopeptide (Lys-Gly) (interchain with G-Cter in SUMO2). Polar residues predominate over residues 231 to 242 (PKSQFGSASHSE). Positions 243 to 263 (AVQEVRKDSVSKDIDSSDRKS) are enriched in basic and acidic residues. Thr362 is subject to Phosphothreonine. 2 disordered regions span residues 390-422 (NQES…EETE) and 459-560 (KEQM…ISQK). 3 positions are modified to phosphoserine: Ser411, Ser414, and Ser415. Residues 439-462 (RHKQEEQDRLLALQLQKEVDKEQM) carry the MIU motif 2 motif. Residues 466 to 477 (RQKGSPDEYHLR) carry the LR motif 2 motif. Ser470 bears the Phosphoserine mark. Residues 508 to 519 (PTPERGSRDKNR) are compositionally biased toward basic and acidic residues. Composition is skewed to polar residues over residues 520–530 (QVSLKMQLKQS) and 549–560 (SAHSLQPSISQK). Lys528 participates in a covalent cross-link: Glycyl lysine isopeptide (Lys-Gly) (interchain with G-Cter in SUMO2).

Belongs to the RNF168 family. As to quaternary structure, monomer. Interacts with UBE2N/UBC13. Sumoylated with SUMO1 by PIAS4 in response to double-strand breaks (DSBs). In terms of processing, ubiquitinated.

Its subcellular location is the nucleus. The catalysed reaction is S-ubiquitinyl-[E2 ubiquitin-conjugating enzyme]-L-cysteine + [acceptor protein]-L-lysine = [E2 ubiquitin-conjugating enzyme]-L-cysteine + N(6)-ubiquitinyl-[acceptor protein]-L-lysine.. It participates in protein modification; protein ubiquitination. E3 ubiquitin-protein ligase required for accumulation of repair proteins to sites of DNA damage. Acts with UBE2N/UBC13 to amplify the RNF8-dependent histone ubiquitination. Recruited to sites of DNA damage at double-strand breaks (DSBs) by binding to ubiquitinated histone H2A and H2AX and amplifies the RNF8-dependent H2A ubiquitination, promoting the formation of 'Lys-63'-linked ubiquitin conjugates. This leads to concentrate ubiquitinated histones H2A and H2AX at DNA lesions to the threshold required for recruitment of TP53BP1 and BRCA1. Also recruited at DNA interstrand cross-links (ICLs) sites and promotes accumulation of 'Lys-63'-linked ubiquitination of histones H2A and H2AX, leading to recruitment of FAAP20/C1orf86 and Fanconi anemia (FA) complex, followed by interstrand cross-link repair. H2A ubiquitination also mediates the ATM-dependent transcriptional silencing at regions flanking DSBs in cis, a mechanism to avoid collision between transcription and repair intermediates. Also involved in class switch recombination in immune system, via its role in regulation of DSBs repair. Following DNA damage, promotes the ubiquitination and degradation of JMJD2A/KDM4A in collaboration with RNF8, leading to unmask H4K20me2 mark and promote the recruitment of TP53BP1 at DNA damage sites. Not able to initiate 'Lys-63'-linked ubiquitination in vitro; possibly due to partial occlusion of the UBE2N/UBC13-binding region. Catalyzes monoubiquitination of 'Lys-13' and 'Lys-15' of nucleosomal histone H2A (H2AK13Ub and H2AK15Ub, respectively). This Homo sapiens (Human) protein is E3 ubiquitin-protein ligase RNF168.